The following is a 108-amino-acid chain: Ribulose bisphosphate carboxylase small subunit (108 aa).

It belongs to the RuBisCO small chain family. As to quaternary structure, heterohexadecamer of 8 large and 8 small subunits.

Its function is as follows. RuBisCO catalyzes two reactions: the carboxylation of D-ribulose 1,5-bisphosphate, the primary event in carbon dioxide fixation, as well as the oxidative fragmentation of the pentose substrate. Both reactions occur simultaneously and in competition at the same active site. Although the small subunit is not catalytic it is essential for maximal activity. This is Ribulose bisphosphate carboxylase small subunit from Nitrobacter vulgaris.